The chain runs to 321 residues: Olfactory receptor 14J1 (321 aa).

The Extracellular segment spans residues 1-23; it reads MVNLTSMSGFLLMGFSDERKLQI. Asparagine 3 carries N-linked (GlcNAc...) asparagine glycosylation. The chain crosses the membrane as a helical span at residues 24–44; sequence LHALVFLVTYLLALTGNLLII. Residues 45–52 lie on the Cytoplasmic side of the membrane; that stretch reads TIITVDRR. The helical transmembrane segment at 53–73 threads the bilayer; the sequence is LHSPMYYFLKHLSLLDLCFIS. Residues 74 to 97 are Extracellular-facing; it reads VTVPQSIANSLMGNGYISLVQCIL. The cysteines at positions 95 and 187 are disulfide-linked. Residues 98–118 form a helical membrane-spanning segment; that stretch reads QVFFFIALASSEVAILTVMSY. Over 119 to 137 the chain is Cytoplasmic; the sequence is DRYAAICQPLHYETIMDPR. A helical membrane pass occupies residues 138–158; sequence ACRHAVIAVWIAGGLSGLMHA. The Extracellular portion of the chain corresponds to 159 to 194; that stretch reads AINFSIPLCGKRVIHQFFCDVPQMLKLACSYEFINE. Residues 195-215 traverse the membrane as a helical segment; it reads IALAAFTTSAAFICLISIVLS. The Cytoplasmic portion of the chain corresponds to 216-235; that stretch reads YIRIFSTVLRIPSAEGRTKV. Residues 236-256 traverse the membrane as a helical segment; the sequence is FSTCLPHLFVATFFLSAAGFE. Over 257 to 269 the chain is Extracellular; sequence FLRLPSDSSSTVD. A helical transmembrane segment spans residues 270–290; that stretch reads LVFSVFYTVIPPTLNPVIYSL. The Cytoplasmic segment spans residues 291-321; it reads RNDSMKAALRKMLSKEELPQRKMCLKAMFKL.

This sequence belongs to the G-protein coupled receptor 1 family.

The protein localises to the cell membrane. In terms of biological role, odorant receptor. This is Olfactory receptor 14J1 (OR14J1) from Homo sapiens (Human).